Consider the following 262-residue polypeptide: Steroid 5-alpha-reductase DET2 (262 aa).

6 helical membrane passes run 13–33 (CLLT…FLQA), 51–71 (IAWF…FPFG), 79–99 (SLLL…IYPL), 113–133 (FPIT…YIQA), 148–168 (WFWW…YINI), and 205–225 (AIEW…GFFL).

It belongs to the steroid 5-alpha reductase family.

It is found in the membrane. It carries out the reaction a 3-oxo-5alpha-steroid + NADP(+) = a 3-oxo-Delta(4)-steroid + NADPH + H(+). It catalyses the reaction 5alpha-campestan-3-one + NADP(+) = campest-4-en-3-one + NADPH + H(+). The enzyme catalyses (22S,24R)-22-hydroxy-5alpha-ergostan-3-one + NADP(+) = (22S)-22-hydroxycampest-4-en-3-one + NADPH + H(+). The catalysed reaction is 3-dehydro-6-deoxoteasterone + NADP(+) = (22R,23R)-22,23-dihydroxycampest-4-en-3-one + NADPH + H(+). It functions in the pathway plant hormone biosynthesis; brassinosteroid biosynthesis. Inhibited by the 4-azasteroids 4-MA. Its function is as follows. Involved in a reduction step in the biosynthesis of the plant steroid, brassinolide (BL); acts at the second step in brassinolide biosynthesis in the 5alpha-reduction of (24R)- 24-methylcholest-4-en-3-one, which is further modified to form campestanol. Can use progesterone, testosterone, androstenedione and campestenone as substrate. Also catalyzes the conversion of campest-4-en-3-one (campesta-4-en-3-one, 4-en-3-one) to campest-3-one (campesta-3-one, 3-one), of (22S,24R)-22-hydroxyergost-4-en-3-one (22-hydroxy-campesta-4-en-3-one, 22-OH-4-en-3-one) to (22S,24R)-22-hydroxy-5alpha-ergostan-3-one (22-hydroxy-campesta-3-one, 22-OH-3-one), and of (22R,23R)-22,23-dihydroxy-5alpha-campestan-3-one (22,23,diOH-4-en-3-one) to (22R,23R)-22,23-dihydroxycampest-4-en-3-one (6-deoxo3DT). Required for the brassinosteroid- (BR) dependent regulation of seed size and shape as well as embryo development. The chain is Steroid 5-alpha-reductase DET2 from Arabidopsis thaliana (Mouse-ear cress).